The primary structure comprises 223 residues: Small ribosomal subunit protein uS3 (223 aa).

Residues 39 to 107 (VREFLHKKLA…PVQINIEEVR (69 aa)) form the KH type-2 domain.

Belongs to the universal ribosomal protein uS3 family. Part of the 30S ribosomal subunit. Forms a tight complex with proteins S10 and S14.

Binds the lower part of the 30S subunit head. Binds mRNA in the 70S ribosome, positioning it for translation. The protein is Small ribosomal subunit protein uS3 of Francisella tularensis subsp. holarctica (strain FTNF002-00 / FTA).